Here is a 512-residue protein sequence, read N- to C-terminus: Maturase K (512 aa).

This sequence belongs to the intron maturase 2 family. MatK subfamily.

It is found in the plastid. Its subcellular location is the chloroplast. Its function is as follows. Usually encoded in the trnK tRNA gene intron. Probably assists in splicing its own and other chloroplast group II introns. This is Maturase K from Amorphophallus titanum (Titan arum).